A 421-amino-acid chain; its full sequence is UDP-N-acetylglucosamine 1-carboxyvinyltransferase 1 (421 aa).

22 to 23 contacts phosphoenolpyruvate; the sequence is KN. Arginine 95 is a UDP-N-acetyl-alpha-D-glucosamine binding site. Cysteine 119 serves as the catalytic Proton donor. Cysteine 119 bears the 2-(S-cysteinyl)pyruvic acid O-phosphothioketal mark. Residues 124 to 128, aspartate 308, and valine 330 contribute to the UDP-N-acetyl-alpha-D-glucosamine site; that span reads RPIEQ.

This sequence belongs to the EPSP synthase family. MurA subfamily.

The protein localises to the cytoplasm. The catalysed reaction is phosphoenolpyruvate + UDP-N-acetyl-alpha-D-glucosamine = UDP-N-acetyl-3-O-(1-carboxyvinyl)-alpha-D-glucosamine + phosphate. It participates in cell wall biogenesis; peptidoglycan biosynthesis. Cell wall formation. Adds enolpyruvyl to UDP-N-acetylglucosamine. This Staphylococcus epidermidis (strain ATCC 35984 / DSM 28319 / BCRC 17069 / CCUG 31568 / BM 3577 / RP62A) protein is UDP-N-acetylglucosamine 1-carboxyvinyltransferase 1.